The chain runs to 414 residues: Bifunctional protein GlmU (414 aa).

Residues 1-208 form a pyrophosphorylase region; the sequence is MDAVILCAGS…SSKLYGIELN (208 aa). Residues 6-9, Q74, and G79 contribute to the UTP site; that span reads LCAG. T80, G130, N142, and N162 together coordinate N-acetyl-alpha-D-glucosamine 1-phosphate. Residues 209 to 228 are linker; the sequence is GYWNDIGRPWDVLSANNYFL. The tract at residues 229–414 is N-acetyltransferase; that stretch reads KNIMPKISGN…KDELIIKKRN (186 aa). The Proton acceptor role is filled by H312. 2 residues coordinate acetyl-CoA: A388 and K405.

In the N-terminal section; belongs to the N-acetylglucosamine-1-phosphate uridyltransferase family. It in the C-terminal section; belongs to the transferase hexapeptide repeat family.

The enzyme catalyses N-acetyl-alpha-D-glucosamine 1-phosphate + UTP + H(+) = UDP-N-acetyl-alpha-D-glucosamine + diphosphate. It carries out the reaction alpha-D-glucosamine 1-phosphate + acetyl-CoA = N-acetyl-alpha-D-glucosamine 1-phosphate + CoA + H(+). The protein operates within nucleotide-sugar biosynthesis; UDP-N-acetyl-alpha-D-glucosamine biosynthesis; N-acetyl-alpha-D-glucosamine 1-phosphate from alpha-D-glucosamine 6-phosphate (route II): step 2/2. Its pathway is nucleotide-sugar biosynthesis; UDP-N-acetyl-alpha-D-glucosamine biosynthesis; UDP-N-acetyl-alpha-D-glucosamine from N-acetyl-alpha-D-glucosamine 1-phosphate: step 1/1. In terms of biological role, catalyzes the last two sequential reactions in the de novo biosynthetic pathway for UDP-N-acetyl-glucosamine (UDP-GlcNAc). Responsible for the acetylation of GlcN-1-P to GlcNAc-1-P, and for the uridyl transfer from UTP to GlcNAc-1-P, to produce UDP-GlcNAc and pyrophosphate. This Methanococcus vannielii (strain ATCC 35089 / DSM 1224 / JCM 13029 / OCM 148 / SB) protein is Bifunctional protein GlmU.